The primary structure comprises 452 residues: UDP-N-acetylmuramoylalanine--D-glutamate ligase (452 aa).

119–125 (GSNGKTT) contributes to the ATP binding site.

It belongs to the MurCDEF family.

It localises to the cytoplasm. The enzyme catalyses UDP-N-acetyl-alpha-D-muramoyl-L-alanine + D-glutamate + ATP = UDP-N-acetyl-alpha-D-muramoyl-L-alanyl-D-glutamate + ADP + phosphate + H(+). The protein operates within cell wall biogenesis; peptidoglycan biosynthesis. In terms of biological role, cell wall formation. Catalyzes the addition of glutamate to the nucleotide precursor UDP-N-acetylmuramoyl-L-alanine (UMA). The protein is UDP-N-acetylmuramoylalanine--D-glutamate ligase (murD) of Streptococcus pyogenes serotype M1.